Consider the following 342-residue polypeptide: MVKVYYNGDIKENVLAGKKVAVIGYGSQGHAHALNLKESGVDVIVGVRKGKSFAKAEEDGHQVFTVREAAEQADIVMVLLPDEQQQKVYEAEIKDGLQAGNSLVFAHGFNVHFHQIVPPADVDVFLVAPKGPGHLVRRTFEQGAGVPALFAIYQDVTGEAKDKALAYAKAIGGARAGVLETTFKEETETDLFGEQAVLCGGLTSLVKAGFETLTEAGYQPELAYFECLHELKLIVDLMYEEGLAGMRYSISDTAQWGDFVSGPRVVDEKVKESMKEVLKDIQNGTFAKEWIVENQVNRPRFNAINASENEHQIEVVGRKLREMMPFVKQGKKKEAVVAGAKN.

The region spanning 2 to 181 is the KARI N-terminal Rossmann domain; the sequence is VKVYYNGDIK…GGARAGVLET (180 aa). Residues 25–28, Arg48, Ser52, and 82–85 each bind NADP(+); these read YGSQ and DEQQ. His107 is an active-site residue. Gly133 provides a ligand contact to NADP(+). The region spanning 182–327 is the KARI C-terminal knotted domain; sequence TFKEETETDL…RKLREMMPFV (146 aa). Mg(2+) contacts are provided by Asp190, Glu194, Glu226, and Glu230. Ser251 serves as a coordination point for substrate.

This sequence belongs to the ketol-acid reductoisomerase family. The cofactor is Mg(2+).

The enzyme catalyses (2R)-2,3-dihydroxy-3-methylbutanoate + NADP(+) = (2S)-2-acetolactate + NADPH + H(+). It catalyses the reaction (2R,3R)-2,3-dihydroxy-3-methylpentanoate + NADP(+) = (S)-2-ethyl-2-hydroxy-3-oxobutanoate + NADPH + H(+). It functions in the pathway amino-acid biosynthesis; L-isoleucine biosynthesis; L-isoleucine from 2-oxobutanoate: step 2/4. Its pathway is amino-acid biosynthesis; L-valine biosynthesis; L-valine from pyruvate: step 2/4. Its function is as follows. Involved in the biosynthesis of branched-chain amino acids (BCAA). Catalyzes an alkyl-migration followed by a ketol-acid reduction of (S)-2-acetolactate (S2AL) to yield (R)-2,3-dihydroxy-isovalerate. In the isomerase reaction, S2AL is rearranged via a Mg-dependent methyl migration to produce 3-hydroxy-3-methyl-2-ketobutyrate (HMKB). In the reductase reaction, this 2-ketoacid undergoes a metal-dependent reduction by NADPH to yield (R)-2,3-dihydroxy-isovalerate. This chain is Ketol-acid reductoisomerase (NADP(+)), found in Bacillus licheniformis (strain ATCC 14580 / DSM 13 / JCM 2505 / CCUG 7422 / NBRC 12200 / NCIMB 9375 / NCTC 10341 / NRRL NRS-1264 / Gibson 46).